The primary structure comprises 506 residues: Maturase K (506 aa).

It belongs to the intron maturase 2 family. MatK subfamily.

The protein resides in the plastid. Its subcellular location is the chloroplast. Its function is as follows. Usually encoded in the trnK tRNA gene intron. Probably assists in splicing its own and other chloroplast group II introns. The sequence is that of Maturase K from Manihot esculenta (Cassava).